The sequence spans 411 residues: Immunity-related GTPase family M protein (411 aa).

Residues 1–21 are disordered; it reads MKPSHKSCEAAPLLPKMPETS. The region spanning 77–253 is the IRG-type G domain; sequence IPVSIFVTGD…PELRNTLQTD (177 aa). GTP contacts are provided by residues 86-93, 111-115, and 193-195; these read DSGNGMSS, TGVVR, and KLD. Serine 204 is subject to Phosphoserine. 234–236 is a binding site for GTP; the sequence is SNL. Lysine 272 is covalently cross-linked (Glycyl lysine isopeptide (Lys-Gly) (interchain with G-Cter in ubiquitin)). Residues 352-376 are alpha-K amphipathic helix; that stretch reads KLRLMTCTTVNALFCLFKFLPCLCH.

This sequence belongs to the TRAFAC class dynamin-like GTPase superfamily. IRG family. In terms of assembly, interacts with ULK1; promoting the coassembly of ULK1 and BECN1. Interacts with BECN1; enhancing BECN1-interacting partners and influencing the composition of the BECN1 complex. Interacts with ATG16L1. Interacts with NOD2; promoting Irgm 'Lys-63'-linked polyubiquitination, which is required for interactions with the core autophagy factors. Interacts with STX17; promoting STX17 recruitment to autophagosomes. Interacts with ATG8 proteins (GABARAP, GABARAPL1, GABARAPL2, MAP1LC3A, MAP1LC3B and MAP1LC3C); promoting STX17 recruitment to autophagosomes. Interacts with TFEB; promoting association between TFEB and PPP3CB and TFEB dephosphorylation. Interacts with PPP3CB; promoting association between TFEB and PPP3CB and TFEB dephosphorylation. Interacts with NLRP3; preventing NLRP3 inflammasome assembly and promoting SQSTM1/p62-dependent autophagic degradation of NLRP3. Interacts with CGAS; promoting SQSTM1/p62-dependent autophagic degradation of CGAS. Interacts with RIGI/RIG-I; promoting SQSTM1/p62-dependent autophagic degradation of RIGI/RIG-I. Interacts with NOD1; promoting SQSTM1/p62-dependent autophagic degradation of RIGI/RIG-I. Interacts with NOD2; promoting SQSTM1/p62-dependent autophagic degradation of RIGI/RIG-I. Interacts with RIPK2; promoting SQSTM1/p62-dependent autophagic degradation of RIGI/RIG-I. Interacts with PIK3CA. Palmitoylated on C-terminal Cys residues. Palmitoylation, together with the alpha-K amphipathic helix, which binds phosphatidylinositol, mediate binding to membranes. In terms of processing, ubiquitinated via 'Lys-63'-linked polyubiquitination in a NOD2-dependent process. 'Lys-63'-linked polyubiquitination is required for interactions with the core autophagy factors. Ubiquitination at Lys-272 by the DCX(WDR77) complex, also named CLR4(WDR77) complex, in intestinal cells, leading to its degradation by the proteasome.

It localises to the golgi apparatus membrane. It is found in the cell membrane. Its subcellular location is the cytoplasmic vesicle. The protein localises to the phagosome membrane. The protein resides in the autophagosome membrane. It localises to the lysosome membrane. It is found in the late endosome membrane. Its subcellular location is the mitochondrion membrane. The protein localises to the cell projection. The protein resides in the phagocytic cup. It carries out the reaction GTP + H2O = GDP + phosphate + H(+). Its function is as follows. Immunity-related GTPase that plays important roles in innate immunity and inflammatory response. Acts as a dynamin-like protein that binds to intracellular membranes and promotes remodeling and trafficking of those membranes. Required for clearance of acute protozoan and bacterial infections by interacting with autophagy and lysosome regulatory proteins, thereby promoting the fusion of phagosomes with lysosomes for efficient degradation of cargo including microbes. Regulates selective autophagy, including xenophagy and mitophagy, both directly and indirectly. Directly regulates autophagy by acting as a molecular adapter that promotes the coassembly of the core autophagy machinery to mediate antimicrobial defense: Irgm (1) activates AMPK, which in turn phosphorylates ULK1 and BECN1 to induce autophagy, (2) promotes the coassembly of ULK1 and BECN1, enhancing BECN1-interacting partners and (3) influences the composition of the BECN1 complex, by competing with the negative regulators BCL2 and RUBCN, to trigger autophagy. Also activates autophagy by promoting recruitment of STX17 to autophagosomes. In collaboration with ATG8 proteins, regulate lysosomal biogenesis, a fundamental process for any autophagic pathway, by promoting TFEB dephosphorylation. Also modulates autophagy by assisting with autophagosome formation and preventing lysosomal deacidification. Regulates autophagy by affecting mitochondrial fusion and fission. Also involved in M1 macrophage activation for the production of proinflammatory cytokines. While activating autophagy, acts as a key negative regulator of the inflammatory and interferon responses both by (1) promoting mitophagy and (2) mediating autophagy-dependent degradation of effectors of the inflammatory response. Promotes degradation of damaged and IFNG/IFN-gamma-stressed mitochondria via mitophagy, preventing cytosolic release of ligands that activate inflammation. Negatively regulates interferon-signaling in hematopoietic stem cells, preserving hematopoietic stem cell number and function. Promotes expansion of activated CD4(+) T-cells by inhibiting IFNG/IFN-gamma signaling, thereby preventing Ifng-mediated cell death of CD4(+) T-cells. Acts as a suppressor of inflammation by promoting recruitment of inflammation effectors, such as CGAS, RIGI/RIG-I and NLRP3, to autophagosome membranes, leading to their SQSTM1/p62-dependent autophagic degradation. Also directly inhibits assembly of the NLRP3 inflammasome by preventing the association between NLRP3 and PYCARD. Acts as a negative regulator of antiviral innate immune response by suppressing the RIPK2-dependent pro-inflammatory response: mediates recruitment of RIPosomes, composed of RIPK2 and NOD1 or NOD2, to autophagosome membranes, promoting their SQSTM1/p62-dependent autophagic degradation. This chain is Immunity-related GTPase family M protein, found in Rattus norvegicus (Rat).